The sequence spans 335 residues: Ketol-acid reductoisomerase (NAD(P)(+)) (335 aa).

In terms of domain architecture, KARI N-terminal Rossmann spans alanine 2–serine 182. Residues tyrosine 25–glutamine 28, arginine 49, serine 53, and aspartate 83–glutamine 86 each bind NADP(+). Residue histidine 108 is part of the active site. Glycine 134 serves as a coordination point for NADP(+). Residues threonine 183 to glycine 328 enclose the KARI C-terminal knotted domain. Aspartate 191, glutamate 195, glutamate 227, and glutamate 231 together coordinate Mg(2+). Residue serine 252 participates in substrate binding.

This sequence belongs to the ketol-acid reductoisomerase family. Homodimer. Mg(2+) serves as cofactor.

It catalyses the reaction (2R)-2,3-dihydroxy-3-methylbutanoate + NAD(+) = (2S)-2-acetolactate + NADH + H(+). The catalysed reaction is (2R)-2,3-dihydroxy-3-methylbutanoate + NADP(+) = (2S)-2-acetolactate + NADPH + H(+). The protein operates within amino-acid biosynthesis; L-isoleucine biosynthesis; L-isoleucine from 2-oxobutanoate: step 2/4. It participates in amino-acid biosynthesis; L-valine biosynthesis; L-valine from pyruvate: step 2/4. Its function is as follows. Involved in the biosynthesis of branched-chain amino acids (BCAA). Catalyzes an alkyl-migration followed by a ketol-acid reduction of (S)-2-acetolactate (S2AL) to yield (R)-2,3-dihydroxy-isovalerate. In the isomerase reaction, S2AL is rearranged via a Mg-dependent methyl migration to produce 3-hydroxy-3-methyl-2-ketobutyrate (HMKB). In the reductase reaction, this 2-ketoacid undergoes a metal-dependent reduction by NADPH or NADH to yield (R)-2,3-dihydroxy-isovalerate. The chain is Ketol-acid reductoisomerase (NAD(P)(+)) from Ignisphaera aggregans (strain DSM 17230 / JCM 13409 / AQ1.S1).